A 128-amino-acid chain; its full sequence is Aspartate 1-decarboxylase (128 aa).

Residue S25 is the Schiff-base intermediate with substrate; via pyruvic acid of the active site. Position 25 is a pyruvic acid (Ser) (S25). T57 serves as a coordination point for substrate. Y58 acts as the Proton donor in catalysis. 73–75 (GSA) lines the substrate pocket.

This sequence belongs to the PanD family. As to quaternary structure, heterooctamer of four alpha and four beta subunits. Pyruvate serves as cofactor. In terms of processing, is synthesized initially as an inactive proenzyme, which is activated by self-cleavage at a specific serine bond to produce a beta-subunit with a hydroxyl group at its C-terminus and an alpha-subunit with a pyruvoyl group at its N-terminus.

Its subcellular location is the cytoplasm. It catalyses the reaction L-aspartate + H(+) = beta-alanine + CO2. The protein operates within cofactor biosynthesis; (R)-pantothenate biosynthesis; beta-alanine from L-aspartate: step 1/1. Its function is as follows. Catalyzes the pyruvoyl-dependent decarboxylation of aspartate to produce beta-alanine. This Burkholderia mallei (strain NCTC 10247) protein is Aspartate 1-decarboxylase.